The sequence spans 137 residues: Small ribosomal subunit protein bS6 (137 aa).

The interval 104-137 is disordered; sequence SLVNKANNKPEPKPTKAKKEDVAPEAKEQAQTEA. Residues 111-137 show a composition bias toward basic and acidic residues; sequence NKPEPKPTKAKKEDVAPEAKEQAQTEA.

It belongs to the bacterial ribosomal protein bS6 family.

Binds together with bS18 to 16S ribosomal RNA. This Helicobacter hepaticus (strain ATCC 51449 / 3B1) protein is Small ribosomal subunit protein bS6.